The following is a 403-amino-acid chain: N-isopropylammelide isopropyl amidohydrolase (403 aa).

Residues H60, H62, and H217 each coordinate Zn(2+). H249 acts as the Proton donor/acceptor in catalysis. Residue D303 participates in Zn(2+) binding.

The protein belongs to the metallo-dependent hydrolases superfamily. N-acyl-D-amino-acid deacylase family. Homotetramer. Zn(2+) is required as a cofactor.

The protein resides in the cytoplasm. It carries out the reaction N-isopropylammelide + H2O + H(+) = isopropylamine + cyanurate. Its pathway is xenobiotic degradation; atrazine degradation; cyanurate from atrazine: step 3/3. Inhibited by N-ethylammeline, N-hydroxyethylammeline, N-isopropylammeline, ammeline and 2-amino-4hydroxy-1,3,5-s-triazine. Functionally, transforms N-isopropylammelide to cyanuric acid and isopropylamine. The sequence is that of N-isopropylammelide isopropyl amidohydrolase (atzC) from Pseudomonas sp. (strain ADP).